We begin with the raw amino-acid sequence, 442 residues long: Cell division protein FtsA (442 aa).

A disordered region spans residues 401–428 (VTSYDNDSYDAPEETVYDEPEQKKSDED). The segment covering 407–419 (DSYDAPEETVYDE) has biased composition (acidic residues).

This sequence belongs to the FtsA/MreB family. In terms of assembly, self-interacts. Interacts with FtsZ.

The protein resides in the cell membrane. Cell division protein that is involved in the assembly of the Z ring. May serve as a membrane anchor for the Z ring. This is Cell division protein FtsA from Enterococcus hirae.